We begin with the raw amino-acid sequence, 142 residues long: Serine protease inhibitor (142 aa).

At Ser1 the chain carries N-acetylserine.

In terms of biological role, serine protease inhibitor. Active against beta-trypsin and alpha-chymotrypsin with dissociation constants of 0.35 nM and 40 nM respectively. Inhibits factor XIa, but not other enzymes involved in coagulation and fibrinolysis. Does not inhibit subtilisin, lysyl endopeptidase, arginyl endopeptidase or papain. This chain is Serine protease inhibitor, found in Lentinula edodes (Shiitake mushroom).